The following is an 80-amino-acid chain: Cytochrome c oxidase subunit 7A1, mitochondrial (80 aa).

The N-terminal 21 residues, 1 to 21 (MRALRVSQALVRSFSSTARNR), are a transit peptide targeting the mitochondrion. At 22 to 46 (LENRVAEKQKIFQADNDLPVHLKGG) the chain is on the mitochondrial matrix side. A helical membrane pass occupies residues 47–75 (ATDNILYRVTMTLCLGGTVYSLYCLGWAS). Residues 76-80 (FPHKK) are Mitochondrial intermembrane-facing.

The protein belongs to the cytochrome c oxidase VIIa family. Component of the complex IV (CIV, cytochrome c oxidase), a multisubunit enzyme composed of 14 subunits. The complex is composed of a catalytic core of 3 subunits MT-CO1, MT-CO2 and MT-CO3, encoded in the mitochondrial DNA, and 11 supernumerary subunits COX4I1 (or COX4I2), COX5A, COX5B, COX6A2 (or COX6A1), COX6B1 (or COX6B2), COX6C, COX7A1 (or COX7A2), COX7B, COX7C, COX8B and NDUFA4, which are encoded in the nuclear genome. The complex exists as a monomer or a dimer and forms supercomplexes (SCs) in the inner mitochondrial membrane with NADH-ubiquinone oxidoreductase (complex I, CI) and ubiquinol-cytochrome c oxidoreductase (cytochrome b-c1 complex, complex III, CIII), resulting in different assemblies (supercomplex SCI(1)III(2)IV(1) and megacomplex MCI(2)III(2)IV(2)).

It localises to the mitochondrion inner membrane. Its pathway is energy metabolism; oxidative phosphorylation. In terms of biological role, component of the mitochondrial respiratory complex IV (CIV, also named cytochrome c oxidase complex), the last enzyme in the mitochondrial electron transport chain which drives oxidative phosphorylation. The CIV complex is the component of the respiratory chain that catalyzes the reduction of oxygen to water. Acts as an assembly factor that specifically drives the homodimerization of CIV complexes, mediating the formation of mitochondrial respiratory supercomplexes (respirasomes) containing two CIV: supercomplxes with two molecules of CIV show improved activity. Despite being highly expressed in brown adipose tissue, not required for thermogenesis. This chain is Cytochrome c oxidase subunit 7A1, mitochondrial (COX7A1), found in Sus scrofa (Pig).